The sequence spans 421 residues: Imidazolonepropionase (421 aa).

The Fe(3+) site is built by H81 and H83. Zn(2+)-binding residues include H81 and H83. 4-imidazolone-5-propanoate is bound by residues R90, Y153, and H186. Y153 provides a ligand contact to N-formimidoyl-L-glutamate. H251 contributes to the Fe(3+) binding site. H251 provides a ligand contact to Zn(2+). E254 contacts 4-imidazolone-5-propanoate. Fe(3+) is bound at residue D326. D326 contributes to the Zn(2+) binding site. Positions 328 and 330 each coordinate N-formimidoyl-L-glutamate. S331 lines the 4-imidazolone-5-propanoate pocket.

Belongs to the metallo-dependent hydrolases superfamily. HutI family. Zn(2+) serves as cofactor. Fe(3+) is required as a cofactor.

Its subcellular location is the cytoplasm. It catalyses the reaction 4-imidazolone-5-propanoate + H2O = N-formimidoyl-L-glutamate. The protein operates within amino-acid degradation; L-histidine degradation into L-glutamate; N-formimidoyl-L-glutamate from L-histidine: step 3/3. Its function is as follows. Catalyzes the hydrolytic cleavage of the carbon-nitrogen bond in imidazolone-5-propanoate to yield N-formimidoyl-L-glutamate. It is the third step in the universal histidine degradation pathway. The sequence is that of Imidazolonepropionase from Streptococcus pyogenes serotype M1.